The sequence spans 665 residues: Target of rapamycin complex 2 subunit sin1 (665 aa).

Residue S62 is modified to Phosphoserine. Composition is skewed to polar residues over residues 65-83 (IVAN…TKQV) and 100-109 (YATSDLSESS). Residues 65–112 (IVANDTVSNVRKPSDTKQVNGAGGQVNHSRAEDSDYATSDLSESSDVG) are disordered. S133 carries the phosphoserine modification. A CRIM domain is found at 255 to 392 (TSALRALLEH…ATPAQIKENQ (138 aa)). The interval 395 to 433 (YPFKSKHPTSIPEANNKTHIRHTSSTSSQSQKQAQDVKD) is disordered. Phosphoserine occurs at positions 404, 490, 502, and 530. The segment at 517–537 (RDKKGSTQQLPTSSPQNSVYG) is disordered. The span at 522-536 (STQQLPTSSPQNSVY) shows a compositional bias: polar residues. The 102-residue stretch at 558-659 (TYQEFLVWKR…IVSRIRALMN (102 aa)) folds into the SIN1-type PH domain.

It belongs to the SIN1 family. The target of rapamycin complex 2 (TORC2) is composed of at least bit61, pop3/wat1, sin1, ste20 and tor1. Interacts with the sty1 MAP kinase. Post-translationally, phosphorylated; under environmental stress. Either Ser-61 or Ser-62 and Ser-298, Ser-299 or Ser-301 are phosphorylated as well.

Its function is as follows. Component of the mechanistic target of rapamycin complex 2 (mTORC2), which regulates multiple cellular processes to control cell growth in response to environmental signals. In response to signals, TORC2 phosphorylates AGC protein kinase family members, such as gad8. TORC2 is required for cell survival under various stress conditions. TORC2 positively controls G1 cell-cycle arrest, sexual development and amino acid uptake. Positively regulates amino acid uptake through the control of expression of amino acid permeases. Within the mTORC2 complex, sin1 acts as a substrate adapter which recognizes and binds AGC protein kinase family members for phosphorylation by tor1. This chain is Target of rapamycin complex 2 subunit sin1, found in Schizosaccharomyces pombe (strain 972 / ATCC 24843) (Fission yeast).